The chain runs to 109 residues: Phosphoribosyl-ATP pyrophosphatase (109 aa).

The protein belongs to the PRA-PH family.

The protein resides in the cytoplasm. The enzyme catalyses 1-(5-phospho-beta-D-ribosyl)-ATP + H2O = 1-(5-phospho-beta-D-ribosyl)-5'-AMP + diphosphate + H(+). It functions in the pathway amino-acid biosynthesis; L-histidine biosynthesis; L-histidine from 5-phospho-alpha-D-ribose 1-diphosphate: step 2/9. The chain is Phosphoribosyl-ATP pyrophosphatase from Parvibaculum lavamentivorans (strain DS-1 / DSM 13023 / NCIMB 13966).